The chain runs to 196 residues: DnaA initiator-associating protein DiaA (196 aa).

Positions 34 to 196 constitute an SIS domain; that stretch reads LVHSLLNGNK…DNTLFPHQDD (163 aa).

It belongs to the SIS family. DiaA subfamily. As to quaternary structure, homotetramer; dimer of dimers.

In terms of biological role, required for the timely initiation of chromosomal replication via direct interactions with the DnaA initiator protein. This chain is DnaA initiator-associating protein DiaA, found in Salmonella enteritidis PT4 (strain P125109).